The sequence spans 294 residues: MSHLKDPTTQYYTGEYPKQKQPTPGIQAKMTPVPDCGEKTYVGSGRLKDRKALVTGGDSGIGRAAAIAYAREGADVAISYLPVEEEDAQDVKKIIEECGRKAVLLPGDLSDEKFARSLVHEAHKALGGLDIMALVAGKQVAIPDIADLTSEQFQKTFAINVFALFWLTQEAIPLLPKGASIITTSSIQAYQPSPHLLDYAATKAAILNYSRGLAKQVAEKGIRVNIVAPGPIWTALQISGGQTQDKIPQFGQQTPMKRAGQPAELAPVYVYLASQESSYVTAEVHGVCGGEHLG.

The segment at 1–32 (MSHLKDPTTQYYTGEYPKQKQPTPGIQAKMTP) is disordered. Residue lysine 39 is modified to N6-acetyllysine. 53-77 (LVTGGDSGIGRAAAIAYAREGADVA) contributes to the NADP(+) binding site. Residue serine 186 participates in substrate binding. Tyrosine 199 (proton acceptor) is an active-site residue.

It belongs to the short-chain dehydrogenases/reductases (SDR) family.

This is an uncharacterized protein from Escherichia coli (strain K12).